The primary structure comprises 599 residues: MGPKRRQLTFREKSRIIQEVEENPDLRKGEIARRFNIPPSTLSTILKNKRAILASERKYGVASTCRKTNKLSPYDKLEGLLIAWFQQIRAAGLPVKGIILKEKALRIAEELGMDDFTASNGWLDRFRRRHGVVACSGVTRSRARSSAPRAPAAPAGPATVPSEGSGGSTPGWHTREEQPPSVAEGYASQDVFSATETSLWYDFLSDQASGLWGGDGPARQATQRLSVLLCANADGSEKLPPLVAGKSAKPRAGQGGLPCDYTANSKGGVTTQALAKYLKALDTRMAAESRRVLLLAGRLAAQSLDTSGLRHVQLAFFPPGTVHPLERGVVQQVKGHYRQAMLLKAMAALEGQDPSGLQLGLVEALHFVAAAWQAVEPSDIATCFREAGFGGGLNATITTSFKSEGEEEEEEEEEEEEEEEEEGEGEEEEEEEEEGEEEGGEGEEEGEEEVEEEGEVDDSDEEEEESSSEGLEAEDWAQGVVEASGGFGGYSVQEEAQFPTLHFLEGGEDSDSDSDEEEDDEEEDEEDEDEEDDEDGDEVPVPSFGEAMAYFAMVKRYLTSFPIDDRVQSHILHLEHDLVHVTRKNHARQAGVRGLGHQS.

N,N,N-trimethylglycine is present on glycine 2. Residues glycine 2 to isoleucine 52 form the HTH psq-type domain. 2 DNA-binding regions (H-T-H motif) span residues lysine 28–asparagine 48 and glycine 97–arginine 129. The 72-residue stretch at cysteine 65–serine 136 folds into the HTH CENPB-type domain. Positions alanine 143–alanine 183 are disordered. Over residues arginine 144–alanine 158 the composition is skewed to low complexity. At serine 165 the chain carries Phosphoserine. Lysine 246 participates in a covalent cross-link: Glycyl lysine isopeptide (Lys-Gly) (interchain with G-Cter in SUMO2). 2 disordered regions span residues asparagine 394 to tryptophan 476 and phenylalanine 498 to serine 543. A phosphothreonine mark is found at threonine 396 and threonine 398. Acidic residues-rich tracts occupy residues glycine 405 to aspartate 475 and glycine 506 to glutamate 538. The tract at residues glycine 536–serine 599 is homodimerization.

In terms of assembly, antiparallel homodimer. Interacts with CENPT. Identified in a centromere complex containing histones H2A, H2B and H4, and at least CENPA, CENPB, CENPC, CENPT, CENPN, HJURP, SUPT16H, SSRP1 and RSF1. Poly-ADP-ribosylated by PARP1. Post-translationally, N-terminally methylated by METTL11A/NTM1. Alpha-N-methylation is stimulated in response to extracellular stimuli, including increased cell density and heat shock, and seems to facilitate binding to CENP-B boxes. Chromatin-bound CENP-B is primarily trimethylated.

Its subcellular location is the nucleus. It localises to the chromosome. The protein resides in the centromere. In terms of biological role, interacts with centromeric heterochromatin in chromosomes and binds to a specific 17 bp subset of alphoid satellite DNA, called the CENP-B box. May organize arrays of centromere satellite DNA into a higher-order structure which then directs centromere formation and kinetochore assembly in mammalian chromosomes. The chain is Major centromere autoantigen B (Cenpb) from Mus musculus (Mouse).